The sequence spans 210 residues: Thymidylate kinase (210 aa).

10–17 is a binding site for ATP; the sequence is GLEGAGKT.

This sequence belongs to the thymidylate kinase family.

It catalyses the reaction dTMP + ATP = dTDP + ADP. Phosphorylation of dTMP to form dTDP in both de novo and salvage pathways of dTTP synthesis. The sequence is that of Thymidylate kinase from Erwinia tasmaniensis (strain DSM 17950 / CFBP 7177 / CIP 109463 / NCPPB 4357 / Et1/99).